A 319-amino-acid chain; its full sequence is Biotin synthase (319 aa).

Residues 41–267 (YKGNKVKVCS…TPDIMICGGR (227 aa)) enclose the Radical SAM core domain. Positions 59, 63, and 66 each coordinate [4Fe-4S] cluster. Cys192 provides a ligand contact to [2Fe-2S] cluster.

It belongs to the radical SAM superfamily. Biotin synthase family. As to quaternary structure, homodimer. Requires [4Fe-4S] cluster as cofactor. The cofactor is [2Fe-2S] cluster.

It carries out the reaction (4R,5S)-dethiobiotin + (sulfur carrier)-SH + 2 reduced [2Fe-2S]-[ferredoxin] + 2 S-adenosyl-L-methionine = (sulfur carrier)-H + biotin + 2 5'-deoxyadenosine + 2 L-methionine + 2 oxidized [2Fe-2S]-[ferredoxin]. The protein operates within cofactor biosynthesis; biotin biosynthesis; biotin from 7,8-diaminononanoate: step 2/2. Functionally, catalyzes the conversion of dethiobiotin (DTB) to biotin by the insertion of a sulfur atom into dethiobiotin via a radical-based mechanism. This Endomicrobium trichonymphae protein is Biotin synthase.